A 369-amino-acid polypeptide reads, in one-letter code: Aminomethyltransferase (369 aa).

It belongs to the GcvT family. The glycine cleavage system is composed of four proteins: P, T, L and H.

The enzyme catalyses N(6)-[(R)-S(8)-aminomethyldihydrolipoyl]-L-lysyl-[protein] + (6S)-5,6,7,8-tetrahydrofolate = N(6)-[(R)-dihydrolipoyl]-L-lysyl-[protein] + (6R)-5,10-methylene-5,6,7,8-tetrahydrofolate + NH4(+). The glycine cleavage system catalyzes the degradation of glycine. This is Aminomethyltransferase from Xanthomonas axonopodis pv. citri (strain 306).